The primary structure comprises 1298 residues: Ras guanine nucleotide exchange factor Q (1298 aa).

Disordered regions lie at residues 1–26 (MDIN…INNF), 46–88 (NNNI…SIEG), 211–271 (NISN…GPLK), 314–384 (YTPP…QQQQ), and 459–533 (LSNG…STTT). Composition is skewed to low complexity over residues 211 to 245 (NISN…NSNN) and 315 to 384 (TPPS…QQQQ). A coiled-coil region spans residues 352-389 (SSLNANNNTNNNNQQLQQQQQQQQQQQLQQQQQLTKSY). Residues 473-482 (LHLSTESTTS) are compositionally biased toward polar residues. Composition is skewed to low complexity over residues 483–501 (NNNN…NNNN) and 508–533 (TTNS…STTT). An N-terminal Ras-GEF domain is found at 550-689 (DKDEVIAGER…YLKKAINDSG (140 aa)). One can recognise a DEP domain in the interval 723-801 (MSQSLQLKER…SSSSTTTTTT (79 aa)). 2 disordered regions span residues 781 to 864 (SKSG…PNSI) and 884 to 920 (GIAN…SNSF). Residues 783-864 (SGSSFSPSSS…ITSTSLPNSI (82 aa)) are compositionally biased toward low complexity. Residues 964–1193 (HPVEIARQLT…YKASHMIEQP (230 aa)) form the Ras-GEF domain. The interval 1214-1267 (TTTTTNNLNNNNNNNNPNNNNNNNNNSANNKSSPSPSPSSSPITSSPISSLTIN) is disordered.

In terms of biological role, promotes the exchange of Ras-bound GDP by GTP. Seems to play a role in chemotaxis. This chain is Ras guanine nucleotide exchange factor Q (gefQ), found in Dictyostelium discoideum (Social amoeba).